The following is an 838-amino-acid chain: Valine--tRNA ligase (838 aa).

The 'HIGH' region motif lies at 46 to 56 (PNLTGTLHIGH). A 'KMSKS' region motif is present at residues 514-518 (KMSKS). Lys-517 lines the ATP pocket. Positions 768–838 (VDNAANNLAH…HLIAKLTKAE (71 aa)) form a coiled coil.

This sequence belongs to the class-I aminoacyl-tRNA synthetase family. ValS type 1 subfamily. In terms of assembly, monomer.

The protein localises to the cytoplasm. The enzyme catalyses tRNA(Val) + L-valine + ATP = L-valyl-tRNA(Val) + AMP + diphosphate. Functionally, catalyzes the attachment of valine to tRNA(Val). As ValRS can inadvertently accommodate and process structurally similar amino acids such as threonine, to avoid such errors, it has a 'posttransfer' editing activity that hydrolyzes mischarged Thr-tRNA(Val) in a tRNA-dependent manner. This Mycoplasma pneumoniae (strain ATCC 29342 / M129 / Subtype 1) (Mycoplasmoides pneumoniae) protein is Valine--tRNA ligase.